The chain runs to 1488 residues: Putative E3 ubiquitin-protein ligase LIN (1488 aa).

3 disordered regions span residues 297-330 (GFSM…EQSS), 351-414 (YDAS…PLRR), and 432-500 (IVSD…SSSS). Basic and acidic residues predominate over residues 366 to 380 (EPKKNIKDEDVEPKV). Residues 382–411 (RSNQKNQMNSPNISPMESPRRASNYSSTNP) show a composition bias toward polar residues. Residues 432 to 444 (IVSDHSLSSSPDT) show a composition bias toward low complexity. The span at 468–486 (SQTPSMNQDNENSLVLNDS) shows a compositional bias: polar residues. In terms of domain architecture, U-box spans 512 to 587 (KPPKDFVCPI…VSWKEQNPEL (76 aa)). 4 WD repeats span residues 1207-1244 (SSNG…PRVI), 1249-1290 (EHKK…DVYD), 1412-1451 (SLST…RVAS), and 1456-1488 (GGNT…WALD).

As to expression, expressed in roots and nodules.

The enzyme catalyses S-ubiquitinyl-[E2 ubiquitin-conjugating enzyme]-L-cysteine + [acceptor protein]-L-lysine = [E2 ubiquitin-conjugating enzyme]-L-cysteine + N(6)-ubiquitinyl-[acceptor protein]-L-lysine.. It functions in the pathway protein modification; protein ubiquitination. Putative E3 ubiquitin ligase involved in the rhizobial infection process. Plays an important role in the early steps of bacterial symbiont thread formation in roots, and in growth, differentiation and maintenance of nodules. The polypeptide is Putative E3 ubiquitin-protein ligase LIN (Medicago truncatula (Barrel medic)).